The chain runs to 338 residues: Sporulation protein YdcC (338 aa).

The helical transmembrane segment at 8–25 (FVLLLTGLLAVLILSACG) threads the bilayer.

Its subcellular location is the cell membrane. In terms of biological role, required for efficient sporulation. This Bacillus subtilis (strain 168) protein is Sporulation protein YdcC (ydcC).